Here is a 326-residue protein sequence, read N- to C-terminus: tRNA-modifying protein YgfZ (326 aa).

2 residues coordinate folate: W27 and W189.

This sequence belongs to the tRNA-modifying YgfZ family.

The protein localises to the cytoplasm. Functionally, folate-binding protein involved in regulating the level of ATP-DnaA and in the modification of some tRNAs. It is probably a key factor in regulatory networks that act via tRNA modification, such as initiation of chromosomal replication. In Escherichia coli (strain SE11), this protein is tRNA-modifying protein YgfZ.